The following is a 634-amino-acid chain: DNA-directed RNA polymerase subunit gamma (634 aa).

Zn(2+)-binding residues include Cys74, Cys76, Cys89, and Cys92. Positions 471, 473, and 475 each coordinate Mg(2+).

This sequence belongs to the RNA polymerase beta' chain family. RpoC1 subfamily. As to quaternary structure, in cyanobacteria the RNAP catalytic core is composed of 2 alpha, 1 beta, 1 beta', 1 gamma and 1 omega subunit. When a sigma factor is associated with the core the holoenzyme is formed, which can initiate transcription. The cofactor is Mg(2+). Zn(2+) serves as cofactor.

The enzyme catalyses RNA(n) + a ribonucleoside 5'-triphosphate = RNA(n+1) + diphosphate. Its function is as follows. DNA-dependent RNA polymerase catalyzes the transcription of DNA into RNA using the four ribonucleoside triphosphates as substrates. The protein is DNA-directed RNA polymerase subunit gamma of Synechococcus sp. (strain RCC307).